The chain runs to 1093 residues: Probable cellulose synthase A catalytic subunit 3 [UDP-forming] (1093 aa).

Residues 1–280 (MEASAGLVAG…PSSQINPYRM (280 aa)) lie on the Cytoplasmic side of the membrane. Zn(2+) contacts are provided by cysteine 39, cysteine 42, cysteine 58, cysteine 61, cysteine 66, cysteine 69, cysteine 81, and cysteine 84. An RING-type; degenerate zinc finger spans residues 39–85 (CQICGDDVGLNPDGEPFVACNECAFPVCRDCYEYERREGTQNCPQCK). Positions 233 to 246 (LHQMRNDGGGKDWD) are enriched in basic and acidic residues. The segment at 233 to 257 (LHQMRNDGGGKDWDGDGDDGDLPLM) is disordered. The chain crosses the membrane as a helical span at residues 281 to 301 (VIIIRLVVLGFFFHYRVMHPV). Residues 302-303 (PD) lie on the Extracellular side of the membrane. A helical transmembrane segment spans residues 304–324 (AFALWLISVICEIWFAMSWIL). Residues 325–869 (DQFPKWFPIE…CLERFSYINS (545 aa)) lie on the Cytoplasmic side of the membrane. UDP-alpha-D-glucose contacts are provided by serine 363, lysine 369, glutamate 370, and aspartate 399. The active site involves aspartate 399. The stretch at 453–480 (VRERRAMKREYEEFKVRINALVAKAQKV) forms a coiled coil. Lysine 540 serves as a coordination point for UDP-alpha-D-glucose. The Mn(2+) site is built by lysine 541 and aspartate 565. The active site involves aspartate 793. The helical transmembrane segment at 870–890 (IVYPFTSIPLLAYCTLPAICL) threads the bilayer. The Extracellular portion of the chain corresponds to 891 to 902 (LTGKFITPELTN). Residues 903 to 923 (VASLWFMSLFICIFATGILEM) traverse the membrane as a helical segment. At 924–939 (RWSGVGIDDWWRNEQF) the chain is on the cytoplasmic side. Residues 940-960 (WVIGGVSSHLFALFQGLLKVI) traverse the membrane as a helical segment. At 961-988 (AGIDTSFTVTSKGGDDEEFSELYTFKWT) the chain is on the extracellular side. The chain crosses the membrane as a helical span at residues 989 to 1009 (TLLIPPTTLLLLNFIGVVAGV). At 1010 to 1020 (SNAINNGYESW) the chain is on the cytoplasmic side. The helical transmembrane segment at 1021-1041 (GPLFGKLFFAFWVIVHLYPFL) threads the bilayer. At 1042–1050 (KGLVGRQNR) the chain is on the extracellular side. Residues 1051 to 1071 (TPTIVIVWSILLASIFSLLWV) traverse the membrane as a helical segment. Residues 1072–1093 (RIDPFLAKNDGPLLEECGLDCN) are Cytoplasmic-facing.

The protein belongs to the glycosyltransferase 2 family. Plant cellulose synthase subfamily. Mn(2+) serves as cofactor. It depends on Zn(2+) as a cofactor.

The protein resides in the cell membrane. It carries out the reaction [(1-&gt;4)-beta-D-glucosyl](n) + UDP-alpha-D-glucose = [(1-&gt;4)-beta-D-glucosyl](n+1) + UDP + H(+). The protein operates within glycan metabolism; plant cellulose biosynthesis. Functionally, probable catalytic subunit of cellulose synthase terminal complexes ('rosettes'), required for beta-1,4-glucan microfibril crystallization, a major mechanism of the cell wall formation. The sequence is that of Probable cellulose synthase A catalytic subunit 3 [UDP-forming] (CESA3) from Oryza sativa subsp. japonica (Rice).